A 287-amino-acid polypeptide reads, in one-letter code: 4-hydroxybenzoate octaprenyltransferase (287 aa).

8 helical membrane passes run 19-39 (IGSL…ADGL), 42-62 (WHVL…GCVI), 95-115 (FFAV…TLTI), 136-156 (YLPQ…AYAA), 166-186 (WLLF…YAMV), 210-230 (IIGL…SQLA), 233-253 (GIYY…QWLI), and 264-284 (AFLN…ASVL).

It belongs to the UbiA prenyltransferase family. Requires Mg(2+) as cofactor.

It is found in the cell inner membrane. The catalysed reaction is all-trans-octaprenyl diphosphate + 4-hydroxybenzoate = 4-hydroxy-3-(all-trans-octaprenyl)benzoate + diphosphate. Its pathway is cofactor biosynthesis; ubiquinone biosynthesis. In terms of biological role, catalyzes the prenylation of para-hydroxybenzoate (PHB) with an all-trans polyprenyl group. Mediates the second step in the final reaction sequence of ubiquinone-8 (UQ-8) biosynthesis, which is the condensation of the polyisoprenoid side chain with PHB, generating the first membrane-bound Q intermediate 3-octaprenyl-4-hydroxybenzoate. This Aliivibrio fischeri (strain MJ11) (Vibrio fischeri) protein is 4-hydroxybenzoate octaprenyltransferase.